A 129-amino-acid chain; its full sequence is MLTPLQIYFPIGVVLLVAVVLAFTMLGLANVLGPRRPSLVKQTPFECGSEPVGSARERFGVKFYVVALLFIVFDIEAIFLYPWAVLLLPDGQGYPGLGWPGFVSMGIFVFTLVAGLVYVWKKGVLDWAD.

3 helical membrane-spanning segments follow: residues 9 to 29, 68 to 88, and 97 to 117; these read FPIG…LGLA, LLFI…VLLL, and LGWP…AGLV.

The protein belongs to the complex I subunit 3 family. As to quaternary structure, NDH-1 is composed of 14 different subunits. Subunits NuoA, H, J, K, L, M, N constitute the membrane sector of the complex.

It is found in the cell inner membrane. The enzyme catalyses a quinone + NADH + 5 H(+)(in) = a quinol + NAD(+) + 4 H(+)(out). Functionally, NDH-1 shuttles electrons from NADH, via FMN and iron-sulfur (Fe-S) centers, to quinones in the respiratory chain. The immediate electron acceptor for the enzyme in this species is believed to be ubiquinone. Couples the redox reaction to proton translocation (for every two electrons transferred, four hydrogen ions are translocated across the cytoplasmic membrane), and thus conserves the redox energy in a proton gradient. This is NADH-quinone oxidoreductase subunit A from Anaeromyxobacter sp. (strain K).